A 182-amino-acid polypeptide reads, in one-letter code: Inorganic pyrophosphatase (182 aa).

K30, R44, and Y56 together coordinate substrate. The Mg(2+) site is built by D66, D71, and D103. Y142 is a binding site for substrate.

The protein belongs to the PPase family. As to quaternary structure, homohexamer. The cofactor is Mg(2+).

It is found in the cytoplasm. The catalysed reaction is diphosphate + H2O = 2 phosphate + H(+). Functionally, catalyzes the hydrolysis of inorganic pyrophosphate (PPi) forming two phosphate ions. The sequence is that of Inorganic pyrophosphatase from Buchnera aphidicola subsp. Acyrthosiphon pisum (strain APS) (Acyrthosiphon pisum symbiotic bacterium).